A 216-amino-acid polypeptide reads, in one-letter code: Putative F-box protein At2g03610 (216 aa).

The region spanning 19-69 (NQDWSKLCPDLLRPILESLSSIDFHRAKTVCSDWYSVWKTCKGYDSKWNQN) is the F-box domain.

The chain is Putative F-box protein At2g03610 from Arabidopsis thaliana (Mouse-ear cress).